The chain runs to 135 residues: MLSPKRTRFRKHHRGRMKGISYRGNHICFGRYALQALEPAWITSRQIEAGRRAMTRNARRGGKIWVRIFPDKPITVRPTETRMGSGKGSPEYWVAVVKPGRILYEMSGVPENIARKAIAIAASKMPIRTQFIISG.

The protein belongs to the universal ribosomal protein uL16 family. In terms of assembly, part of the 50S ribosomal subunit.

The protein localises to the plastid. It localises to the chloroplast. The protein is Large ribosomal subunit protein uL16c of Morus indica (Mulberry).